Reading from the N-terminus, the 255-residue chain is MVKSHIGSWILVLFVAMWSDVGLCKKRPKPGGGWNTGGSRYPGQGSPGGNRYPPQGGGGWGQPHGGGWGQPHGGGWGQPHGGGWGQPHGGGGWGQGGTHSQWNKPSKPKTNMKHVAGAAAAGAVVGGLGGYLLGSAMSRPLIHFGNDCEDRYYRENMYRYPNQVYYRSVDQYNNQSTFVHDCVNITVKQHTVTTTKGENFTETDIKMMERVVEQMCITQYQRESEAYYQRGASVILFSSPPVILLVSFLIFLIVG.

A signal peptide spans 1 to 24; sequence MVKSHIGSWILVLFVAMWSDVGLC. The segment at 25 to 41 is interaction with ADGRG6; it reads KKRPKPGGGWNTGGSRY. The tract at residues 25–232 is interaction with GRB2, ERI3 and SYN1; that stretch reads KKRPKPGGGW…ESEAYYQRGA (208 aa). The segment at 28–110 is disordered; the sequence is PKPGGGWNTG…QWNKPSKPKT (83 aa). Tandem repeats lie at residues 54-62, 63-70, 71-78, 79-86, and 87-94. Residues 54 to 94 form a 5 X 8 AA tandem repeats of P-H-G-G-G-W-G-Q region; sequence PQGGGGWGQPHGGGWGQPHGGGWGQPHGGGWGQPHGGGGWG. The segment covering 55–97 has biased composition (gly residues); sequence QGGGGWGQPHGGGWGQPHGGGWGQPHGGGWGQPHGGGGWGQGG. Cu(2+) contacts are provided by histidine 64, glycine 65, glycine 66, histidine 72, glycine 73, glycine 74, histidine 80, glycine 81, glycine 82, histidine 88, glycine 90, and glycine 91. Asparagine 174, asparagine 184, and asparagine 199 each carry an N-linked (GlcNAc...) asparagine glycan. Cysteine 182 and cysteine 216 are oxidised to a cystine. Alanine 232 carries GPI-anchor amidated alanine lipidation. Positions 233–255 are cleaved as a propeptide — removed in mature form; that stretch reads SVILFSSPPVILLVSFLIFLIVG.

It belongs to the prion family. In terms of assembly, monomer and homodimer. Has a tendency to aggregate into amyloid fibrils containing a cross-beta spine, formed by a steric zipper of superposed beta-strands. Soluble oligomers may represent an intermediate stage on the path to fibril formation. Copper binding may promote oligomerization. Interacts with GRB2, APP, ERI3/PRNPIP and SYN1. Mislocalized cytosolically exposed PrP interacts with MGRN1; this interaction alters MGRN1 subcellular location and causes lysosomal enlargement. Interacts with APP. Interacts with KIAA1191. Interacts with ADGRG6.

The protein resides in the cell membrane. Its subcellular location is the golgi apparatus. Its function is as follows. Its primary physiological function is unclear. May play a role in neuronal development and synaptic plasticity. May be required for neuronal myelin sheath maintenance. May promote myelin homeostasis through acting as an agonist for ADGRG6 receptor. May play a role in iron uptake and iron homeostasis. Soluble oligomers are toxic to cultured neuroblastoma cells and induce apoptosis (in vitro). Association with GPC1 (via its heparan sulfate chains) targets PRNP to lipid rafts. Also provides Cu(2+) or Zn(2+) for the ascorbate-mediated GPC1 deaminase degradation of its heparan sulfate side chains. The chain is Major prion protein (PRNP) from Canis lupus familiaris (Dog).